We begin with the raw amino-acid sequence, 107 residues long: uncharacterized protein (107 aa).

Residues 1-14 show a composition bias toward polar residues; that stretch reads MTERNASGRMNTKG. The interval 1–20 is disordered; it reads MTERNASGRMNTKGRSIKET.

The protein localises to the mitochondrion. This is an uncharacterized protein from Arabidopsis thaliana (Mouse-ear cress).